A 102-amino-acid polypeptide reads, in one-letter code: Small ribosomal subunit protein uS10 (102 aa).

Belongs to the universal ribosomal protein uS10 family. As to quaternary structure, part of the 30S ribosomal subunit.

Functionally, involved in the binding of tRNA to the ribosomes. The chain is Small ribosomal subunit protein uS10 from Thermosipho melanesiensis (strain DSM 12029 / CIP 104789 / BI429).